The chain runs to 311 residues: Pantothenate kinase (311 aa).

ATP is bound at residue glycine 93–serine 100.

This sequence belongs to the prokaryotic pantothenate kinase family.

It localises to the cytoplasm. It catalyses the reaction (R)-pantothenate + ATP = (R)-4'-phosphopantothenate + ADP + H(+). It participates in cofactor biosynthesis; coenzyme A biosynthesis; CoA from (R)-pantothenate: step 1/5. In Haemophilus influenzae (strain ATCC 51907 / DSM 11121 / KW20 / Rd), this protein is Pantothenate kinase (coaA).